We begin with the raw amino-acid sequence, 692 residues long: Polyribonucleotide nucleotidyltransferase (692 aa).

Residues Asp-484 and Asp-490 each coordinate Mg(2+). The region spanning 551-614 is the KH domain; that stretch reads PKYFIHKISQ…ALVERVKSIT (64 aa). The region spanning 620 to 688 is the S1 motif domain; the sequence is GAVYTGKVKT…NRGRIRLSRK (69 aa).

The protein belongs to the polyribonucleotide nucleotidyltransferase family. The cofactor is Mg(2+).

It is found in the cytoplasm. It carries out the reaction RNA(n+1) + phosphate = RNA(n) + a ribonucleoside 5'-diphosphate. Involved in mRNA degradation. Catalyzes the phosphorolysis of single-stranded polyribonucleotides processively in the 3'- to 5'-direction. In Desulfotalea psychrophila (strain LSv54 / DSM 12343), this protein is Polyribonucleotide nucleotidyltransferase.